We begin with the raw amino-acid sequence, 474 residues long: UDP-N-acetylmuramoyl-L-alanyl-D-glutamate--2,6-diaminopimelate ligase (474 aa).

Residue Ser-21 participates in UDP-N-acetyl-alpha-D-muramoyl-L-alanyl-D-glutamate binding. 93–99 (GTNGKSS) is a binding site for ATP. Residues 139 to 140 (TT), Ser-166, Gln-172, and Arg-174 contribute to the UDP-N-acetyl-alpha-D-muramoyl-L-alanyl-D-glutamate site. Lys-206 carries the post-translational modification N6-carboxylysine. Residues Arg-367, 391–394 (DNPR), Gly-441, and Glu-445 each bind meso-2,6-diaminopimelate. The Meso-diaminopimelate recognition motif signature appears at 391 to 394 (DNPR).

The protein belongs to the MurCDEF family. MurE subfamily. The cofactor is Mg(2+). Carboxylation is probably crucial for Mg(2+) binding and, consequently, for the gamma-phosphate positioning of ATP.

Its subcellular location is the cytoplasm. It carries out the reaction UDP-N-acetyl-alpha-D-muramoyl-L-alanyl-D-glutamate + meso-2,6-diaminopimelate + ATP = UDP-N-acetyl-alpha-D-muramoyl-L-alanyl-gamma-D-glutamyl-meso-2,6-diaminopimelate + ADP + phosphate + H(+). It functions in the pathway cell wall biogenesis; peptidoglycan biosynthesis. Functionally, catalyzes the addition of meso-diaminopimelic acid to the nucleotide precursor UDP-N-acetylmuramoyl-L-alanyl-D-glutamate (UMAG) in the biosynthesis of bacterial cell-wall peptidoglycan. The protein is UDP-N-acetylmuramoyl-L-alanyl-D-glutamate--2,6-diaminopimelate ligase of Rickettsia bellii (strain RML369-C).